The chain runs to 477 residues: MAGKTLYDKLWEAHEVKRRDDGSSLIYIDRHIIHEVTSPQAFEGLRLANRKPWRIDANIATPDHNVPTTPERKGGIEAIVDQVSRLQVQTLDENCDEYGIVEFKMNDVRQGIVHVISPEQGATLPGMTVVCGDSHTSTHGAFGALAHGIGTSEVEHVLATQCLVAKKMKNMLVRVEGTLPAGVTAKDIVLAVIGKIGTAGGNGHAMEFAGSAIRELSMEGRMTICNMSIEAGARVGLVATDATTIAYVEGRPYAPKGEQWERAVEAWKDLVSDDDAVFDTVVELDAAQIKPQVSWGTSPEMVLAVDQRVPDPAAEADLVKRGSIERALKYMGLRANQAITDIHLDRVFIGSCTNSRIEDLRAAAEIAKGRKVAATVKQAIVVPGSGLVKAQAEREGLDKIFLEAGFEWREPGCSMCLAMNPDRLESGEHCASTSNRNFEGRQGAGGRTHLVSPAMAAAAAVTGHFIDVRELIQGSAA.

Residues C352, C413, and C416 each contribute to the [4Fe-4S] cluster site.

Belongs to the aconitase/IPM isomerase family. LeuC type 1 subfamily. As to quaternary structure, heterodimer of LeuC and LeuD. The cofactor is [4Fe-4S] cluster.

It catalyses the reaction (2R,3S)-3-isopropylmalate = (2S)-2-isopropylmalate. The protein operates within amino-acid biosynthesis; L-leucine biosynthesis; L-leucine from 3-methyl-2-oxobutanoate: step 2/4. Its function is as follows. Catalyzes the isomerization between 2-isopropylmalate and 3-isopropylmalate, via the formation of 2-isopropylmaleate. The polypeptide is 3-isopropylmalate dehydratase large subunit (Pseudomonas putida (strain W619)).